The sequence spans 311 residues: Probable manganese-dependent inorganic pyrophosphatase (311 aa).

H9, D13, D15, D77, H99, and D151 together coordinate Mn(2+).

This sequence belongs to the PPase class C family. The cofactor is Mn(2+).

It is found in the cytoplasm. The enzyme catalyses diphosphate + H2O = 2 phosphate + H(+). This chain is Probable manganese-dependent inorganic pyrophosphatase, found in Streptococcus sanguinis (strain SK36).